The chain runs to 313 residues: MSDVENASLPPAIFIMGPTASGKTALAMTLREYLPVELISVDSALIYKDMDIGTAKPSADELARAPHRLIDILDPTESYSAADFRRDALREMADITAAGRIPLLVGGTMLYFKALLEGLSPLPPADAAVRQRIEEQAKEIGWEAMHRQLSEIDPTAAIRIHPNDPQRLSRALEVFFISGNTLTELTKTSGDALPYQVHQFAIAPAMRELLHQRIEQRFHQMLAAGFETEARALFARHDLHTDMPSIRCVGYRQMWSYLSGEIDYDEMVYRGVCATRQLAKRQMTWLRGWDDVCWLDSENPTEALDKVIQVVSA.

Position 17 to 24 (17 to 24 (GPTASGKT)) interacts with ATP. 19–24 (TASGKT) contributes to the substrate binding site. Interaction with substrate tRNA regions lie at residues 42-45 (DSAL), 166-170 (QRLSR), and 247-252 (RCVGYR).

This sequence belongs to the IPP transferase family. In terms of assembly, monomer. Mg(2+) is required as a cofactor.

It catalyses the reaction adenosine(37) in tRNA + dimethylallyl diphosphate = N(6)-dimethylallyladenosine(37) in tRNA + diphosphate. Its function is as follows. Catalyzes the transfer of a dimethylallyl group onto the adenine at position 37 in tRNAs that read codons beginning with uridine, leading to the formation of N6-(dimethylallyl)adenosine (i(6)A). This chain is tRNA dimethylallyltransferase, found in Pectobacterium atrosepticum (strain SCRI 1043 / ATCC BAA-672) (Erwinia carotovora subsp. atroseptica).